The chain runs to 403 residues: Phosphoglycerate kinase (403 aa).

Substrate-binding positions include 22 to 24 (DFN), arginine 37, 60 to 63 (HFGR), arginine 119, and arginine 152. ATP-binding positions include lysine 202, glutamate 324, and 354-357 (GGDT).

The protein belongs to the phosphoglycerate kinase family. Monomer.

It is found in the cytoplasm. The catalysed reaction is (2R)-3-phosphoglycerate + ATP = (2R)-3-phospho-glyceroyl phosphate + ADP. The protein operates within carbohydrate degradation; glycolysis; pyruvate from D-glyceraldehyde 3-phosphate: step 2/5. The sequence is that of Phosphoglycerate kinase from Maricaulis maris (strain MCS10) (Caulobacter maris).